The chain runs to 228 residues: ATP-dependent dethiobiotin synthetase BioD 1 (228 aa).

13–18 is a binding site for ATP; that stretch reads EVGKTV. Position 17 (threonine 17) interacts with Mg(2+). Lysine 38 is an active-site residue. Serine 42 lines the substrate pocket. ATP is bound by residues aspartate 55, 116 to 119, 176 to 177, and 205 to 207; these read EGAG, ND, and PWL. Positions 55 and 116 each coordinate Mg(2+).

The protein belongs to the dethiobiotin synthetase family. As to quaternary structure, homodimer. The cofactor is Mg(2+).

It is found in the cytoplasm. It catalyses the reaction (7R,8S)-7,8-diammoniononanoate + CO2 + ATP = (4R,5S)-dethiobiotin + ADP + phosphate + 3 H(+). It functions in the pathway cofactor biosynthesis; biotin biosynthesis; biotin from 7,8-diaminononanoate: step 1/2. Catalyzes a mechanistically unusual reaction, the ATP-dependent insertion of CO2 between the N7 and N8 nitrogen atoms of 7,8-diaminopelargonic acid (DAPA, also called 7,8-diammoniononanoate) to form a ureido ring. This chain is ATP-dependent dethiobiotin synthetase BioD 1, found in Salmonella typhi.